Consider the following 649-residue polypeptide: Vitamin K-dependent protein S (649 aa).

The propeptide occupies 1-14; it reads SKQQASQVLVRKRR. The Gla domain occupies 15–60; the sequence is ANSMLEETKQGNLERECIEELCNKEEAREVFENDPETDYFYPKYLV. 4-carboxyglutamate occurs at positions 20, 21, 28, 30, 33, 34, 39, 40, 43, 46, and 50. A disulfide bridge connects residues Cys31 and Cys36. Residues 61–89 are thrombin-sensitive; that stretch reads CLRSFQSGLFTAARQSTDAYPDLRSCVNA. Residues 90–128 form the EGF-like 1 domain; sequence IPDQCSPLPCNEDGYMSCKDGKASFTCTCKPGWQGERCE. Cystine bridges form between Cys94/Cys107, Cys99/Cys116, Cys118/Cys127, Cys134/Cys148, Cys144/Cys157, Cys159/Cys172, Cys178/Cys190, Cys185/Cys199, Cys201/Cys214, Cys220/Cys229, Cys225/Cys238, Cys240/Cys255, and Cys422/Cys448. At Asp109 the chain carries (3R)-3-hydroxyaspartate. The EGF-like 2; calcium-binding domain maps to 130-173; that stretch reads DINECKDPSNINGGCSQICDNTPGSYHCSCKSGFVMLSNKKDCK. Residues 174 to 215 form the EGF-like 3; calcium-binding domain; the sequence is DVDECSLKPNMCGTAVCKNIPGDFECECPEGYRYNLKSKSCE. Residues 216 to 256 enclose the EGF-like 4; calcium-binding domain; the sequence is DVDECSENMCAQLCVNYPGGYTCYCDGKKGFKLAQDQKSCE. Laminin G-like domains lie at 272 to 448 and 457 to 639; these read LLYL…NKHC and YYPG…AHSC. 3 N-linked (GlcNAc...) asparagine glycosylation sites follow: Asn472, Asn482, and Asn503. A disulfide bridge links Cys612 with Cys639.

In terms of processing, the iron and 2-oxoglutarate dependent 3-hydroxylation of aspartate and asparagine is (R) stereospecific within EGF domains. In terms of tissue distribution, plasma.

It is found in the secreted. Its function is as follows. Anticoagulant plasma protein; it is a cofactor to activated protein C in the degradation of coagulation factors Va and VIIIa. It helps to prevent coagulation and stimulating fibrinolysis. The polypeptide is Vitamin K-dependent protein S (PROS1) (Macaca mulatta (Rhesus macaque)).